A 354-amino-acid chain; its full sequence is MRFDLEPPSSVAAAHRTGVLLINLGTPDAPTPRAVRRYLAEFLSDPRVVEIPQVVWQVLLRTLILPLRGRASAKKYAAVWMPEGSPLRVYTERQTEGVRHLLASNAYQVTVDYAMRYGSPNIAQALAQFKRAGVERVLLMPMYPQYSASTTATAFDAAFAALARMRNQPEVRTVRQYADHPAYIHALAEQVRQYWAQHGRPDFAAGDKLVLSFHGVPKRTLDLGDPYHDQCQQTGALLMAALGLSTLECRVTFQSRFGKAEWLQPYTAPTLRELGAAGVRRADVFCPGFTADCLETIEEIGMEVRDEFIAGGGQAFHRIPCLNGAHAWIGALGEIVAENLQGWPVKAAQPEMVN.

Residues histidine 214 and glutamate 295 each contribute to the Fe cation site.

Belongs to the ferrochelatase family.

The protein localises to the cytoplasm. It catalyses the reaction heme b + 2 H(+) = protoporphyrin IX + Fe(2+). Its pathway is porphyrin-containing compound metabolism; protoheme biosynthesis; protoheme from protoporphyrin-IX: step 1/1. Functionally, catalyzes the ferrous insertion into protoporphyrin IX. The chain is Ferrochelatase from Burkholderia ambifaria (strain MC40-6).